A 257-amino-acid chain; its full sequence is Small ribosomal subunit protein eS1 (257 aa).

The tract at residues 237–257 (GADGEKVDRPDDYEPPVQQEV) is disordered. Residues 239-248 (DGEKVDRPDD) are compositionally biased toward basic and acidic residues.

The protein belongs to the eukaryotic ribosomal protein eS1 family. In terms of assembly, component of the small ribosomal subunit. Mature ribosomes consist of a small (40S) and a large (60S) subunit. The 40S subunit contains about 33 different proteins and 1 molecule of RNA (18S). The 60S subunit contains about 49 different proteins and 3 molecules of RNA (28S, 5.8S and 5S).

The protein resides in the cytoplasm. In Caenorhabditis elegans, this protein is Small ribosomal subunit protein eS1.